Reading from the N-terminus, the 455-residue chain is MLERNDLWNLIKFSMEQDLSKITFQTFVEPAKPLQLDKAQMTIEVPTQLHRDYWEKNLAAKFTDIAMQATNEQIRPVMITEEERQQLTRDKDSQVTTGNVAGQQPTTATTPTFMRETKLNPKYTFDTFVIGKGNQMAHAAALVVSEEPGTMYNPLFFYGGVGLGKTHLMHAIGNKLLETDPTSNIKYVTSESFTNELINAIQTKKQEAFREEYRNVDLLLVDDIQFFANKEATQEEFFHTFNALYEDDKQIVLTSDRLPNEIPQLQDRLVSRFKWGLSVDITPPDLETRIAILRNKADLEGIEIPDDTLSYIAGQIDSNVRELEGALARVQAYSRLNNSPITTSLVADALKSLHLSSKLSEVSIPVIQEKVAKYFHVTMADLKGKKRNKQIVIPRQIAMYLSRELTESSLPRIGNEFGGKDHTTVIHAHDKITKALKTDAELQKAVGDLTGQLKS.

The tract at residues methionine 1–arginine 75 is domain I, interacts with DnaA modulators. The tract at residues arginine 75 to threonine 117 is domain II. Over residues arginine 84–serine 93 the composition is skewed to basic and acidic residues. Residues arginine 84–threonine 107 form a disordered region. A domain III, AAA+ region region spans residues lysine 118–serine 334. Residues glycine 162, glycine 164, lysine 165, and threonine 166 each coordinate ATP. The interval arginine 335–serine 455 is domain IV, binds dsDNA.

The protein belongs to the DnaA family. As to quaternary structure, oligomerizes as a right-handed, spiral filament on DNA at oriC.

It localises to the cytoplasm. In terms of biological role, plays an essential role in the initiation and regulation of chromosomal replication. ATP-DnaA binds to the origin of replication (oriC) to initiate formation of the DNA replication initiation complex once per cell cycle. Binds the DnaA box (a 9 base pair repeat at the origin) and separates the double-stranded (ds)DNA. Forms a right-handed helical filament on oriC DNA; dsDNA binds to the exterior of the filament while single-stranded (ss)DNA is stabiized in the filament's interior. The ATP-DnaA-oriC complex binds and stabilizes one strand of the AT-rich DNA unwinding element (DUE), permitting loading of DNA polymerase. After initiation quickly degrades to an ADP-DnaA complex that is not apt for DNA replication. Binds acidic phospholipids. In Lactiplantibacillus plantarum (strain ATCC BAA-793 / NCIMB 8826 / WCFS1) (Lactobacillus plantarum), this protein is Chromosomal replication initiator protein DnaA.